The following is a 1081-amino-acid chain: Zinc finger protein 827 (1081 aa).

A compositionally biased stretch (basic and acidic residues) spans 1–10 (MPRRKQEQPK). Positions 1 to 14 (MPRRKQEQPKRLPS) are mediates direct interaction with RBBP4. The segment at 1–77 (MPRRKQEQPK…DTSLGSTTPS (77 aa)) is disordered. Residues 3–5 (RRK) carry the RRK motif; mediates NuRD recruitment to telomeres motif. The span at 62–77 (EQSTSPDTSLGSTTPS) shows a compositional bias: polar residues. Glycyl lysine isopeptide (Lys-Gly) (interchain with G-Cter in SUMO2) cross-links involve residues K176, K216, and K226. Disordered regions lie at residues 258–280 (KKVSERSLTPGQEHPPPASSFLS) and 305–348 (EKSS…SLEL). Residues 327–344 (VSPPPPPPPPPPPPPPPQ) are compositionally biased toward pro residues. Residues K360 and K372 each participate in a glycyl lysine isopeptide (Lys-Gly) (interchain with G-Cter in SUMO2) cross-link. 3 C2H2-type zinc fingers span residues 374–396 (FQCPICGLVIKRKSYWKRHMVIH), 402–424 (HQCPLCPFRCARKDNLKSHMKVH), and 433–455 (FQCQLCPFTSSRHFSLKLHMRCH). Glycyl lysine isopeptide (Lys-Gly) (interchain with G-Cter in SUMO2) cross-links involve residues K466, K475, K523, K549, K580, K587, and K597. The interval 525–553 (EPKEDNGLPTSFTLNTADRPANHTKLKDP) is disordered. Polar residues predominate over residues 616–627 (VFSPESEVSTPG). Residues 616–640 (VFSPESEVSTPGVSEDALKPQEGKG) form a disordered region. A compositionally biased stretch (basic and acidic residues) spans 631-640 (DALKPQEGKG). Residues K634, K639, and K658 each participate in a glycyl lysine isopeptide (Lys-Gly) (interchain with G-Cter in SUMO2) cross-link. A Glycyl lysine isopeptide (Lys-Gly) (interchain with G-Cter in SUMO1); alternate cross-link involves residue K673. Residue K673 forms a Glycyl lysine isopeptide (Lys-Gly) (interchain with G-Cter in SUMO2); alternate linkage. Glycyl lysine isopeptide (Lys-Gly) (interchain with G-Cter in SUMO2) cross-links involve residues K704, K710, K742, K778, and K798. 2 C2H2-type zinc fingers span residues 817–839 (FPCDVCGKVFGRQQTLSRHLSLH) and 845–867 (YKCHLCPYAAKCRANLNQHLTVH). Glycyl lysine isopeptide (Lys-Gly) (interchain with G-Cter in SUMO2) cross-links involve residues K870 and K891. 2 C2H2-type zinc fingers span residues 897 to 919 (YSCHVCGFETELNVQFVSHMSLH) and 929 to 952 (ICCTACDFVTMEEAEIKTHIGTKH). Over residues 947–960 (HIGTKHTGEDRKTP) the composition is skewed to basic and acidic residues. The segment at 947–1013 (HIGTKHTGED…GSQPSLNSEE (67 aa)) is disordered. Residue K958 forms a Glycyl lysine isopeptide (Lys-Gly) (interchain with G-Cter in SUMO2) linkage. A compositionally biased stretch (low complexity) spans 961–978 (SESNSPSSSSLSALSDSA). Residues 979 to 988 (NSKDDSDGSQ) show a composition bias toward basic and acidic residues. A Glycyl lysine isopeptide (Lys-Gly) (interchain with G-Cter in SUMO2) cross-link involves residue K1014. 2 consecutive C2H2-type zinc fingers follow at residues 1019–1041 (FECVFCNFVCKTKNMFERHLQIH) and 1047–1069 (FECDVCHKFMKTPEQLLEHKKCH).

It belongs to the krueppel C2H2-type zinc-finger protein family. As to quaternary structure, part of a transcription inhibitory ribonucleoprotein complex composed at least of the circular RNA circZNF827, HNRNPK and HNRNPL. Interacts with the nucleosome remodeling and histone deacetylase/NuRD complex. Interacts with RBBP4; the interaction is direct and recruits RBBP4, a component of the NuRD complex, to telomeres.

It localises to the nucleus. The protein resides in the chromosome. It is found in the telomere. Functionally, as part of a ribonucleoprotein complex composed at least of HNRNPK, HNRNPL and the circular RNA circZNF827 that nucleates the complex on chromatin, may negatively regulate the transcription of genes involved in neuronal differentiation. Could also recruit the nucleosome remodeling and histone deacetylase/NuRD complex to telomeric regions of chromosomes to regulate chromatin remodeling as part of telomere maintenance. The chain is Zinc finger protein 827 (ZNF827) from Macaca fascicularis (Crab-eating macaque).